The following is a 284-amino-acid chain: uncharacterized protein (284 aa).

FMN is bound at residue Q54. The Proton donor role is filled by C83. FMN contacts are provided by residues K125, H153, 183 to 185 (NGG), and 207 to 208 (AN).

This sequence belongs to the Dus family. It depends on FMN as a cofactor.

Its function is as follows. Catalyzes the synthesis of dihydrouridine, a modified base found in the D-loop of most tRNAs. This is an uncharacterized protein from Caenorhabditis elegans.